The sequence spans 117 residues: Large ribosomal subunit protein uL22 (117 aa).

Belongs to the universal ribosomal protein uL22 family. As to quaternary structure, part of the 50S ribosomal subunit.

This protein binds specifically to 23S rRNA; its binding is stimulated by other ribosomal proteins, e.g. L4, L17, and L20. It is important during the early stages of 50S assembly. It makes multiple contacts with different domains of the 23S rRNA in the assembled 50S subunit and ribosome. Functionally, the globular domain of the protein is located near the polypeptide exit tunnel on the outside of the subunit, while an extended beta-hairpin is found that lines the wall of the exit tunnel in the center of the 70S ribosome. The chain is Large ribosomal subunit protein uL22 from Lactobacillus helveticus (strain DPC 4571).